A 507-amino-acid polypeptide reads, in one-letter code: Tryptamine 4-monooxygenase (507 aa).

An N-terminal signal peptide occupies residues 1–19 (MIVLLVSLVLAGCIYYANA). Residues 403 to 425 (PNPSEFRPERYLSSDGKPDPTVR) are disordered. Over residues 408-425 (FRPERYLSSDGKPDPTVR) the composition is skewed to basic and acidic residues. C439 lines the heme pocket.

It belongs to the cytochrome P450 family. Requires heme as cofactor.

It catalyses the reaction tryptamine + AH2 + O2 = 4-hydroxytryptamine + A + H2O. The protein operates within secondary metabolite biosynthesis. Its function is as follows. Tryptamine 4-monooxygenase; part of the gene cluster that mediates the biosynthesis of psilocybin, a psychotropic tryptamine-derived natural product. The first step in the pathway is the decarboxylation of L-tryptophan to tryptamine by the decarboxylase psiD. PsiD does not decarboxylate phenylalanine, tyrosine, or 5-hydroxy- L -tryptophan (5-HTP). 4-hydroxy-L-tryptophan is accepted as substrate by psiD as well. The cytochrome P450 monooxygenase psiH then converts tryptamine to 4-hydroxytryptamine. The kinase psiK catalyzes the 4-O-phosphorylation step by converting 4-hydroxytryptamine into norbaeocystin. The methyltransferase psiM then catalyzes iterative methyl transfer to the amino group of norbaeocystin to yield psilocybin via a monomethylated intermediate, baeocystin. This Psilocybe cyanescens protein is Tryptamine 4-monooxygenase.